We begin with the raw amino-acid sequence, 112 residues long: UPF0060 membrane protein SCO3297 (112 aa).

4 consecutive transmembrane segments (helical) span residues 8-28 (ALFVVAALFEIGGAWLVWQGV), 33-53 (GWLWAAGGVLALGAYGFVATF), 62-82 (ILAAYGGIFVTGSILWGVVAD), and 88-108 (RWDIAGALVCLAGMALIMWAP).

This sequence belongs to the UPF0060 family.

The protein localises to the cell membrane. This chain is UPF0060 membrane protein SCO3297, found in Streptomyces coelicolor (strain ATCC BAA-471 / A3(2) / M145).